The following is a 481-amino-acid chain: Glutamate--glyoxylate aminotransferase 2 (481 aa).

Lys291 is subject to N6-(pyridoxal phosphate)lysine. The Peroxisomal targeting signal signature appears at 479-481 (SRM).

It belongs to the class-I pyridoxal-phosphate-dependent aminotransferase family. Alanine aminotransferase subfamily. In terms of assembly, homodimer. Pyridoxal 5'-phosphate is required as a cofactor. Post-translationally, the N-terminus is blocked. In terms of tissue distribution, expressed at low levels in seedlings, leaves, flowers, roots, and green siliques.

It localises to the peroxisome. The enzyme catalyses L-alanine + 2-oxoglutarate = pyruvate + L-glutamate. It carries out the reaction glyoxylate + L-alanine = glycine + pyruvate. It catalyses the reaction glycine + 2-oxoglutarate = glyoxylate + L-glutamate. It functions in the pathway photosynthesis; C4 acid pathway. Its pathway is amino-acid degradation; L-alanine degradation via transaminase pathway; pyruvate from L-alanine: step 1/1. Its function is as follows. Catalyzes the Glu:glyoxylate aminotransferase (GGT), Ala:glyoxylate aminotransferase (AGT), Ala:2-oxoglutarate aminotransferase (AKT) and Glu:pyruvate aminotransferase (GPT) reactions in peroxisomes. This Arabidopsis thaliana (Mouse-ear cress) protein is Glutamate--glyoxylate aminotransferase 2 (GGAT2).